The following is a 554-amino-acid chain: HMG box-containing protein 4 (554 aa).

Disordered stretches follow at residues 15–368 and 417–469; these read GTED…AYQV and HKQN…PAKV. Residues 75–88 show a composition bias toward basic and acidic residues; that stretch reads SSDDYHADHSTDSA. Residues 95–105 are compositionally biased toward low complexity; sequence SLPSPSSSDTA. The segment covering 113 to 123 has biased composition (polar residues); it reads TSPQADTSTTH. Composition is skewed to basic and acidic residues over residues 145-154 and 217-226; these read PHKDYHKKSG and LGREEIESRS. The segment covering 236 to 251 has biased composition (polar residues); the sequence is YTPRSGGTPDSASSTG. Basic residues predominate over residues 268–296; it reads MKKKKKSKKSKKKKDKHKDEKHKKHSKSK. The segment covering 313 to 332 has biased composition (pro residues); the sequence is LPSPPPPPATTPPTSPPSIP. Residues 341–357 show a composition bias toward basic and acidic residues; it reads HTEEQSDKKKKKEDPEK. The HMG box DNA-binding region spans 359–427; that stretch reads KKKNMSAYQV…KQNKAEATTV (69 aa). 2 stretches are compositionally biased toward low complexity: residues 433–445 and 454–467; these read SSES…GSSS and SPTS…TSPA.

In terms of assembly, interacts with nlk.2.

It is found in the nucleus. In terms of biological role, negatively regulates Wnt/beta-catenin signaling during development. The polypeptide is HMG box-containing protein 4 (hmgxb4) (Xenopus laevis (African clawed frog)).